We begin with the raw amino-acid sequence, 63 residues long: Large ribosomal subunit protein bL35 (63 aa).

It belongs to the bacterial ribosomal protein bL35 family.

The sequence is that of Large ribosomal subunit protein bL35 from Thermobifida fusca (strain YX).